The following is a 264-amino-acid chain: Thymidylate synthase (264 aa).

DUMP is bound at residue Arg21. His51 provides a ligand contact to (6R)-5,10-methylene-5,6,7,8-tetrahydrofolate. DUMP is bound at residue 126-127 (RR). The active-site Nucleophile is Cys146. Residues 166-169 (RSAD), Asn177, and 207-209 (HIY) each bind dUMP. Residue Asp169 coordinates (6R)-5,10-methylene-5,6,7,8-tetrahydrofolate. Ala263 is a binding site for (6R)-5,10-methylene-5,6,7,8-tetrahydrofolate.

It belongs to the thymidylate synthase family. Bacterial-type ThyA subfamily. As to quaternary structure, homodimer.

Its subcellular location is the cytoplasm. It carries out the reaction dUMP + (6R)-5,10-methylene-5,6,7,8-tetrahydrofolate = 7,8-dihydrofolate + dTMP. It participates in pyrimidine metabolism; dTTP biosynthesis. Catalyzes the reductive methylation of 2'-deoxyuridine-5'-monophosphate (dUMP) to 2'-deoxythymidine-5'-monophosphate (dTMP) while utilizing 5,10-methylenetetrahydrofolate (mTHF) as the methyl donor and reductant in the reaction, yielding dihydrofolate (DHF) as a by-product. This enzymatic reaction provides an intracellular de novo source of dTMP, an essential precursor for DNA biosynthesis. The sequence is that of Thymidylate synthase from Rhizobium meliloti (strain 1021) (Ensifer meliloti).